The primary structure comprises 376 residues: Secreted LysM effector LysM9 (376 aa).

Residues Met1–Gly25 form the signal peptide. The LysM domain occupies Ser41 to Leu89. The tract at residues Ser190 to Thr219 is disordered.

The protein belongs to the secreted LysM effector family.

Its subcellular location is the secreted. Its function is as follows. Secreted LysM effector that might have a role in sequestration of chitin oligosaccharides (breakdown products of fungal cell walls that are released during invasion and act as triggers of host immunity) to dampen host defense. The protein is Secreted LysM effector LysM9 of Penicillium expansum (Blue mold rot fungus).